The chain runs to 303 residues: Polyisoprenyl-teichoic acid--peptidoglycan teichoic acid transferase TagU (303 aa).

The Cytoplasmic portion of the chain corresponds to 1-6 (MSKGKK). Residues 7–27 (IFAIIFGIILVLFLAVVGMGA) traverse the membrane as a helical; Signal-anchor for type II membrane protein segment. At 28–303 (KLYWDVSKSM…QELKNQLNTK (276 aa)) the chain is on the extracellular side.

It belongs to the LytR/CpsA/Psr (LCP) family.

It is found in the cell membrane. It participates in cell wall biogenesis. Its function is as follows. May catalyze the final step in cell wall teichoic acid biosynthesis, the transfer of the anionic cell wall polymers (APs) from their lipid-linked precursor to the cell wall peptidoglycan (PG). The chain is Polyisoprenyl-teichoic acid--peptidoglycan teichoic acid transferase TagU from Enterococcus faecalis (strain ATCC 700802 / V583).